A 170-amino-acid polypeptide reads, in one-letter code: TFIIB-type zinc finger protein (170 aa).

The TFIIB-type zinc-finger motif lies at 1–30; it reads MECPVCGSNEIVWDNKNGEVVCSNCGIIID. Positions 3, 6, 22, and 25 each coordinate Zn(2+).

It belongs to the TFIIB family. Zn(2+) is required as a cofactor.

This chain is TFIIB-type zinc finger protein, found in Saccharolobus shibatae (strain ATCC 51178 / DSM 5389 / JCM 8931 / NBRC 15437 / B12) (Sulfolobus shibatae).